The chain runs to 905 residues: MQGNERIQDKNEKEKAYAPYLDGASVSTDNGPILSVFALQEIMQKIRQNQSDMAAHAPDVDGAIPEVMTIISGIKGLLEEKDYKVINAPPNSFRTIPMQSTEYVLQVNTFYERMSEIGGPIDETDPIGFYALILEKLKFLKSEGAFILQGIATKDYRGAEIADPEIIGVSFQNALSHLAAIDRQIIQDTLNGMIIENGLVADRNVDVFRAAMSDPIYRIHNVLQGYIEGIQYGELRESVNWLMRLGLRKRIEFANDFLTDFRRADTIWIISQRLPINANVIWNVPRCHIANLITNVALCLPTGEYLMPNPRINSITITQRITQTNPFSIISGLTPTAVQMNDVRKIYLALMFPNQIILDIKPDSSHAVDPVLRMVAGVLGHVMFTYGPIMTNITPTMAELLDRALSDYLLYMYNNRIPINYGPTGQPLDFRIGARNQYDCNAFRADPQTGRGYNGWGVVDVQRVQPSPYDHVQRVIRYCDIDSREIIDPRTYGMNMTYPIFREMLRMLVAAGKDQEAAYLRQMLPFHMIRFARINQIINEDLLSAFSLPDQNFDVVLHNFIQGNFGETDPVVLEVSWASIWFAFVRRFEPIARSDLLEAAPLIEARYAAELSTMQMDVQQLRMMRARVPDTVINATPSQCWKAVLKNAPEPIKNLMNLSHSFSFVNVRDIVRWSQQRDIQESLAYVLNREAWAIANDFEDLMLVDHVYIQRTMLPEPRLDDINEFRRQGFFYTNMIDGAPPIGDVTHYTYAIANLQANMGQFRAAIRRTLDDNGWIQFGGMLRNIKIKFFDSRPPDEILTAMPYVYTEEERDGVRMVAFKYATTATAYFLLYNVAYSNTPDTLITVNPTFTMTKIHMRKKIVRRVRAPDVVSQVNKRLVAYKGKMRLMDVTKCLKTGVQLARPTI.

This sequence belongs to the orbivirus VP3 family.

It localises to the virion. Functionally, the VP3 protein is one of the five proteins (with VP1, VP4, VP6 and VP7) which form the inner capsid of the virus. This is Core protein VP3 (Segment-3) from African horse sickness virus (AHSV).